Consider the following 365-residue polypeptide: GTPase Obg (365 aa).

Positions 1 to 159 (MKFIDEARIE…RMLKLELKVL (159 aa)) constitute an Obg domain. The OBG-type G domain occupies 160-334 (ADVGLLGMPN…LVYAIKDHLA (175 aa)). Residues 166–173 (GMPNAGKS), 191–195 (FTTLH), 213–216 (DIPG), 284–287 (NKLD), and 315–317 (SAL) contribute to the GTP site. Residues Ser173 and Thr193 each contribute to the Mg(2+) site.

This sequence belongs to the TRAFAC class OBG-HflX-like GTPase superfamily. OBG GTPase family. As to quaternary structure, monomer. Mg(2+) serves as cofactor.

Its subcellular location is the cytoplasm. Functionally, an essential GTPase which binds GTP, GDP and possibly (p)ppGpp with moderate affinity, with high nucleotide exchange rates and a fairly low GTP hydrolysis rate. Plays a role in control of the cell cycle, stress response, ribosome biogenesis and in those bacteria that undergo differentiation, in morphogenesis control. The sequence is that of GTPase Obg from Cupriavidus metallidurans (strain ATCC 43123 / DSM 2839 / NBRC 102507 / CH34) (Ralstonia metallidurans).